The primary structure comprises 258 residues: Chaperone protein FaeE (258 aa).

A signal peptide spans 1–34; the sequence is MSKRNAVTTFFTNRVTKALGMTLALMMTCQSAMA. Positions 239–258 are disordered; that stretch reads KKPAAPEAAKAEKADTAEQK. Residues 247–258 show a composition bias toward basic and acidic residues; that stretch reads AKAEKADTAEQK.

Belongs to the periplasmic pilus chaperone family.

The protein resides in the periplasm. Its function is as follows. Mediates assembly of pili by forming soluble multimeric complexes with pili subunits as an intermediate step in the assembly process. This protein is involved in K88 pili assembly. Protects pilin protein from proteolytic degradation by DegP and from premature polymerization. The sequence is that of Chaperone protein FaeE (faeE) from Escherichia coli.